The sequence spans 252 residues: Imidazole glycerol phosphate synthase subunit HisF (252 aa).

Catalysis depends on residues Asp-11 and Asp-130.

It belongs to the HisA/HisF family. In terms of assembly, heterodimer of HisH and HisF.

Its subcellular location is the cytoplasm. It catalyses the reaction 5-[(5-phospho-1-deoxy-D-ribulos-1-ylimino)methylamino]-1-(5-phospho-beta-D-ribosyl)imidazole-4-carboxamide + L-glutamine = D-erythro-1-(imidazol-4-yl)glycerol 3-phosphate + 5-amino-1-(5-phospho-beta-D-ribosyl)imidazole-4-carboxamide + L-glutamate + H(+). It functions in the pathway amino-acid biosynthesis; L-histidine biosynthesis; L-histidine from 5-phospho-alpha-D-ribose 1-diphosphate: step 5/9. Its function is as follows. IGPS catalyzes the conversion of PRFAR and glutamine to IGP, AICAR and glutamate. The HisF subunit catalyzes the cyclization activity that produces IGP and AICAR from PRFAR using the ammonia provided by the HisH subunit. This is Imidazole glycerol phosphate synthase subunit HisF from Moorella thermoacetica (strain ATCC 39073 / JCM 9320).